We begin with the raw amino-acid sequence, 197 residues long: dCTP deaminase, dUMP-forming (197 aa).

DCTP is bound by residues 105–110 (RSSIGR), Asp123, 131–133 (TLE), Gln152, Tyr166, Lys174, and Gln178. The Proton donor/acceptor role is filled by Glu133. Residues 161–183 (PAERPYGHPSRDSKYIGQTRPQT) form a disordered region. A compositionally biased stretch (basic and acidic residues) spans 165–174 (PYGHPSRDSK).

It belongs to the dCTP deaminase family. In terms of assembly, homotrimer.

The enzyme catalyses dCTP + 2 H2O = dUMP + NH4(+) + diphosphate. The protein operates within pyrimidine metabolism; dUMP biosynthesis; dUMP from dCTP: step 1/1. Its function is as follows. Bifunctional enzyme that catalyzes both the deamination of dCTP to dUTP and the hydrolysis of dUTP to dUMP without releasing the toxic dUTP intermediate. This Methanothermobacter thermautotrophicus (strain ATCC 29096 / DSM 1053 / JCM 10044 / NBRC 100330 / Delta H) (Methanobacterium thermoautotrophicum) protein is dCTP deaminase, dUMP-forming.